Consider the following 340-residue polypeptide: Farnesyl pyrophosphate synthase 1 (340 aa).

Isopentenyl diphosphate is bound by residues lysine 47, arginine 50, and glutamine 85. Mg(2+) is bound by residues aspartate 92 and aspartate 96. Arginine 101 is a dimethylallyl diphosphate binding site. Arginine 102 is an isopentenyl diphosphate binding site. Dimethylallyl diphosphate-binding residues include lysine 188, threonine 189, glutamine 227, lysine 244, and lysine 253.

It belongs to the FPP/GGPP synthase family. It depends on Mg(2+) as a cofactor. Mainly expressed in trichomes and flowers, and, to a lower extent, in leaves, roots and stems.

The protein resides in the cytoplasm. Its subcellular location is the nucleus. It catalyses the reaction isopentenyl diphosphate + dimethylallyl diphosphate = (2E)-geranyl diphosphate + diphosphate. The catalysed reaction is isopentenyl diphosphate + (2E)-geranyl diphosphate = (2E,6E)-farnesyl diphosphate + diphosphate. The protein operates within isoprenoid biosynthesis; farnesyl diphosphate biosynthesis; farnesyl diphosphate from geranyl diphosphate and isopentenyl diphosphate: step 1/1. It participates in sesquiterpene biosynthesis. Its pathway is isoprenoid biosynthesis; geranyl diphosphate biosynthesis; geranyl diphosphate from dimethylallyl diphosphate and isopentenyl diphosphate: step 1/1. In terms of biological role, catalyzes the sequential condensation of isopentenyl pyrophosphate with the allylic pyrophosphates, dimethylallyl pyrophosphate, and then with the resultant geranylpyrophosphate to the ultimate product farnesyl pyrophosphate. In Cannabis sativa (Hemp), this protein is Farnesyl pyrophosphate synthase 1.